Here is an 862-residue protein sequence, read N- to C-terminus: Eukaryotic translation initiation factor 3 subunit C (862 aa).

The interval 1–81 is disordered; it reads MSSRFFYGGG…EEEEKVTVVK (81 aa). Residues 17–54 are compositionally biased toward acidic residues; that stretch reads SSDEEELYSDREEEEKSEEEESSEEEDETSEEEESDEE. Residues 55-65 are compositionally biased toward basic and acidic residues; the sequence is TGAKKFLKDVA. A compositionally biased stretch (acidic residues) spans 66 to 75; sequence SDSEEEEEEE. In terms of domain architecture, PCI spans 600–774; that stretch reads FHMHINLELL…NAIVFRKGVE (175 aa). Residues 813–862 form a disordered region; the sequence is RDQGAGARGGRGSGRGGQARGGPRFPGGQQGRRPGGQQFGGGALGGAIKA. Over residues 818–862 the composition is skewed to gly residues; that stretch reads GARGGRGSGRGGQARGGPRFPGGQQGRRPGGQQFGGGALGGAIKA.

This sequence belongs to the eIF-3 subunit C family. In terms of assembly, component of the eukaryotic translation initiation factor 3 (eIF-3) complex.

Its subcellular location is the cytoplasm. Its function is as follows. Component of the eukaryotic translation initiation factor 3 (eIF-3) complex, which is involved in protein synthesis of a specialized repertoire of mRNAs and, together with other initiation factors, stimulates binding of mRNA and methionyl-tRNAi to the 40S ribosome. The eIF-3 complex specifically targets and initiates translation of a subset of mRNAs involved in cell proliferation. This chain is Eukaryotic translation initiation factor 3 subunit C (nip1), found in Neosartorya fischeri (strain ATCC 1020 / DSM 3700 / CBS 544.65 / FGSC A1164 / JCM 1740 / NRRL 181 / WB 181) (Aspergillus fischerianus).